The sequence spans 631 residues: Protein FRIABLE 1 (631 aa).

A compositionally biased stretch (low complexity) spans 1-13 (MSVGVPVNPSSSS). The disordered stretch occupies residues 1-36 (MSVGVPVNPSSSSQLPAAPTTTTRRRVADSQEDHSH). Topologically, residues 1-120 (MSVGVPVNPS…NMRSTTNLGR (120 aa)) are cytoplasmic. Residues 26–36 (RVADSQEDHSH) are compositionally biased toward basic and acidic residues. The chain crosses the membrane as a helical; Signal-anchor for type II membrane protein span at residues 121 to 141 (FILTLLSILVVTFFLIVALSG). The Lumenal portion of the chain corresponds to 142-631 (GVGRRRKHVE…RPSLRAQSLR (490 aa)). N-linked (GlcNAc...) asparagine glycosylation is found at asparagine 246, asparagine 329, and asparagine 364. Residue 384 to 386 (HLR) participates in substrate binding. Asparagine 398 and asparagine 425 each carry an N-linked (GlcNAc...) asparagine glycan.

This sequence belongs to the glycosyltransferase GT106 family. In terms of tissue distribution, ubiquitous. Strong expression in young seedlings, particularly at the junction between hypocotyl and root, in emerging cotyledons, and in parts of the roots. Also detected in the inflorescence (sepals, petals, mature pollen and siliques) and rosette leaves.

It is found in the golgi apparatus membrane. It functions in the pathway glycan metabolism. Its function is as follows. Glycosyltransferase required for normal cell adhesion and cell wall integrity. This is Protein FRIABLE 1 from Arabidopsis thaliana (Mouse-ear cress).